The sequence spans 167 residues: CGG triplet repeat-binding protein 1 (167 aa).

S56 bears the Phosphoserine mark. A Nuclear localization signal motif is present at residues 80–84; it reads RKKQR. Phosphoserine is present on S164.

In terms of tissue distribution, ubiquitous. Highly expressed in placenta, thymus, lymph nodes, cerebellum and cerebral cortex. Low expression in other regions of the brain.

Its subcellular location is the nucleus. In terms of biological role, binds to nonmethylated 5'-d(CGG)(n)-3' trinucleotide repeats in the FMR1 promoter. May play a role in regulating FMR1 promoter. This Homo sapiens (Human) protein is CGG triplet repeat-binding protein 1 (CGGBP1).